Consider the following 76-residue polypeptide: Putative UPF0377 protein YGL260W (76 aa).

Belongs to the UPF0377 family.

This Saccharomyces cerevisiae (strain ATCC 204508 / S288c) (Baker's yeast) protein is Putative UPF0377 protein YGL260W.